The following is a 117-amino-acid chain: Large ribosomal subunit protein uL18 (117 aa).

It belongs to the universal ribosomal protein uL18 family. In terms of assembly, part of the 50S ribosomal subunit; part of the 5S rRNA/L5/L18/L25 subcomplex. Contacts the 5S and 23S rRNAs.

Functionally, this is one of the proteins that bind and probably mediate the attachment of the 5S RNA into the large ribosomal subunit, where it forms part of the central protuberance. This is Large ribosomal subunit protein uL18 from Thiobacillus denitrificans (strain ATCC 25259 / T1).